The following is a 199-amino-acid chain: Probable GTP-binding protein EngB (199 aa).

The EngB-type G domain occupies 28 to 199 (DLPEIALAGR…DSWDAILEQV (172 aa)). GTP contacts are provided by residues 36–43 (GRSNVGKS), 63–67 (GKTQL), 81–84 (DVPG), 148–151 (TKAD), and 180–182 (FSS). Positions 43 and 65 each coordinate Mg(2+).

This sequence belongs to the TRAFAC class TrmE-Era-EngA-EngB-Septin-like GTPase superfamily. EngB GTPase family. The cofactor is Mg(2+).

Functionally, necessary for normal cell division and for the maintenance of normal septation. The polypeptide is Probable GTP-binding protein EngB (Streptococcus pyogenes serotype M18 (strain MGAS8232)).